Reading from the N-terminus, the 881-residue chain is Mechanosensitive ion channel protein 5 (881 aa).

Basic and acidic residues-rich tracts occupy residues 1–12 (MAAVDSTDRRDF) and 48–59 (DGEKGKNDKKGD). The disordered stretch occupies residues 1–248 (MAAVDSTDRR…RNGFEEEEEE (248 aa)). Residues 115–145 (ELQSNTPPRPATASNTPRRGLTTISESSSPV) show a composition bias toward polar residues. The span at 169 to 179 (EEGRNRDEAEV) shows a compositional bias: basic and acidic residues. Phosphoserine is present on Ser-231. 6 consecutive transmembrane segments (helical) span residues 265–285 (LSFW…SLVC), 309–329 (VLVL…IVFL), 349–369 (KSVQ…FLFD), 387–407 (VLVC…LVKV), 642–662 (IINV…LGIA), and 677–697 (VAFV…FLFV). The segment at 861 to 881 (PTANPTSSDRIPPSWMQQRGP) is disordered. The segment covering 864-881 (NPTSSDRIPPSWMQQRGP) has biased composition (polar residues).

Belongs to the MscS (TC 1.A.23) family.

The protein localises to the membrane. In terms of biological role, mechanosensitive channel that opens in response to stretch forces in the membrane lipid bilayer. The protein is Mechanosensitive ion channel protein 5 (MSL5) of Arabidopsis thaliana (Mouse-ear cress).